Consider the following 524-residue polypeptide: Protein-export membrane protein SecD (524 aa).

6 helical membrane passes run 10–30 (VIFL…PTMG), 366–386 (KFDS…VVFI), 389–409 (GKPQ…YILL), 420–442 (DLSV…IIIA), 465–485 (FWVI…LAVL), and 487–507 (LGDL…GVLV).

It belongs to the SecD/SecF family. SecD subfamily. Part of the protein translocation apparatus. Forms a homodimer and complexes with SecF.

It localises to the cell membrane. Functionally, involved in protein export. This chain is Protein-export membrane protein SecD, found in Haloferax volcanii (strain ATCC 29605 / DSM 3757 / JCM 8879 / NBRC 14742 / NCIMB 2012 / VKM B-1768 / DS2) (Halobacterium volcanii).